The following is a 453-amino-acid chain: Cysteine desulfurase, mitochondrial (453 aa).

A mitochondrion-targeting transit peptide spans 1-34; the sequence is MASKVISATIRRTLTKPHGTFSRCRYLSTAAAAT. Pyridoxal 5'-phosphate-binding positions include 123-124, Asn203, Gln231, and 251-253; these read AT and SAH. Lys254 is modified (N6-(pyridoxal phosphate)lysine). Residue Thr291 coordinates pyridoxal 5'-phosphate. The active-site Cysteine persulfide intermediate is the Cys377. Cys377 is a binding site for [2Fe-2S] cluster.

This sequence belongs to the class-V pyridoxal-phosphate-dependent aminotransferase family. NifS/IscS subfamily. Interacts with FH. Interacts with SUFE1. Pyridoxal 5'-phosphate serves as cofactor.

The protein localises to the mitochondrion. The enzyme catalyses (sulfur carrier)-H + L-cysteine = (sulfur carrier)-SH + L-alanine. With respect to regulation, threefold increase in the catalytic activity in the presence of FH (frataxin). 30-fold increase in the catalytic activity in the presence of SUFE1. Functionally, catalyzes the removal of elemental sulfur from cysteine to produce alanine. Supplies the inorganic sulfur for iron-sulfur (Fe-S) clusters. The sequence is that of Cysteine desulfurase, mitochondrial from Arabidopsis thaliana (Mouse-ear cress).